The chain runs to 303 residues: Protein UL24 homolog (303 aa).

The segment covering 235 to 249 (KFRDRTNKKSNDQLR) has biased composition (basic and acidic residues). The segment at 235 to 280 (KFRDRTNKKSNDQLRARQANARPCKKKQHNNKRLRNNRKHGGKVSR) is disordered. The span at 257 to 277 (PCKKKQHNNKRLRNNRKHGGK) shows a compositional bias: basic residues.

It belongs to the herpesviridae UL24 family.

The protein resides in the virion. The protein localises to the host cytoplasm. Its subcellular location is the host nucleus. It localises to the host nucleolus. It is found in the host Golgi apparatus. In terms of biological role, may participate in nuclear egress of viral particles. Plays a role in the dispersal of several host nucleolar proteins including NCL/nucleolin and NPM1. Since deletion of host NCL/nucleolin negatively impact on nuclear egress, UL24 supposedly acts on this process through its effect on host nucleoli. The polypeptide is Protein UL24 homolog (20) (Saimiri sciureus (Common squirrel monkey)).